We begin with the raw amino-acid sequence, 332 residues long: MSDFAFFALETLIKCIIIIAIFASLAGLATYAERKVLAYFQRRIGPDMVGPFGLIQLVADMIKLFTKEDIIPSNSQKFIFAIAPLISAICAFVSLAAIPMLPEFTLFGRVIQPIVADINVALLFVIGTSGLCFYAVFLGGLASNNKWSILGAARGLVSIISYESVGALALIAIIMLVGSFSLVDINNYQSDGFFSWLIFKQPLAFVLFIIALFIETNRTPLCLTENDAEIVAGYGTEYSGLRWGMFFIGEYTSMIAGAILVTLLFLGGFNSFWIIPGWIMMIVKSSFIFFWYFWARAAFPQLRPDQVMKMCYLILIPLAVLNLLITALTVLL.

A run of 9 helical transmembrane segments spans residues phenylalanine 4–serine 24, isoleucine 44–leucine 64, phenylalanine 78–isoleucine 98, valine 120–glycine 140, valine 165–isoleucine 185, phenylalanine 194–isoleucine 214, isoleucine 255–isoleucine 275, isoleucine 279–phenylalanine 299, and tyrosine 312–leucine 332.

This sequence belongs to the complex I subunit 1 family. NDH-1 is composed of 14 different subunits. Subunits NuoA, H, J, K, L, M, N constitute the membrane sector of the complex.

The protein localises to the cell inner membrane. The enzyme catalyses a quinone + NADH + 5 H(+)(in) = a quinol + NAD(+) + 4 H(+)(out). In terms of biological role, NDH-1 shuttles electrons from NADH, via FMN and iron-sulfur (Fe-S) centers, to quinones in the respiratory chain. The immediate electron acceptor for the enzyme in this species is believed to be ubiquinone. Couples the redox reaction to proton translocation (for every two electrons transferred, four hydrogen ions are translocated across the cytoplasmic membrane), and thus conserves the redox energy in a proton gradient. This subunit may bind ubiquinone. The polypeptide is NADH-quinone oxidoreductase subunit H (Campylobacter jejuni subsp. jejuni serotype O:2 (strain ATCC 700819 / NCTC 11168)).